We begin with the raw amino-acid sequence, 182 residues long: Ribulose bisphosphate carboxylase small subunit, chloroplastic (182 aa).

The N-terminal 58 residues, 1–58 (MASSMLSTATVASINRVSPAQATMVAPFTGLKSTPVFPTTRKTNSDITSITSNGGKVQ), are a transit peptide targeting the chloroplast.

This sequence belongs to the RuBisCO small chain family. In terms of assembly, heterohexadecamer of 8 large and 8 small subunits.

It localises to the plastid. The protein resides in the chloroplast. Functionally, ruBisCO catalyzes two reactions: the carboxylation of D-ribulose 1,5-bisphosphate, the primary event in carbon dioxide fixation, as well as the oxidative fragmentation of the pentose substrate. Both reactions occur simultaneously and in competition at the same active site. Although the small subunit is not catalytic it is essential for maximal activity. The chain is Ribulose bisphosphate carboxylase small subunit, chloroplastic from Manihot esculenta (Cassava).